Here is a 310-residue protein sequence, read N- to C-terminus: MSGRTLLLSPPSLSSQPERLNGILQSYDRKTTDLQMLDRLILGVVNLPDAAYSRIIILAGEEDSISESSKLTTRETFSHIARSLQKGGYICSQHEQQGQAFDHNEAVLVGLIPTDNGKFVKPDIEDMRAVPLRLGRKKHDKTISSNLAEPVRNHQASPTVAQDQAEDGFRYSSGRNIVTASAHETSDNEIIDEEDLLDGSELAAPIIQPPECRPKAGRRRRACKDCTCGLAQKLEEEDAMRRHAADKQLGAMKLSHGDLAEVDFTVQGKVGSCGNCSLGDAFRCEGCPFIGLPAFQPGEEIRLLNDDIQL.

Positions 1 to 130 (MSGRTLLLSP…KPDIEDMRAV (130 aa)) are N-terminal SAM-like domain. The interval 131–203 (PLRLGRKKHD…EDLLDGSELA (73 aa)) is linker. Positions 212, 223, 226, and 228 each coordinate [2Fe-2S] cluster. Positions 212–228 (CRPKAGRRRRACKDCTC) are fe-S binding site A. The [4Fe-4S] cluster site is built by C273, C276, C284, and C287. 2 consecutive short sequence motifs (cx2C motif) follow at residues 273–276 (CGNC) and 284–287 (CEGC). The fe-S binding site B stretch occupies residues 273 to 287 (CGNCSLGDAFRCEGC).

Belongs to the anamorsin family. Monomer. Interacts with tah18. Interacts with mia40. Requires [2Fe-2S] cluster as cofactor. [4Fe-4S] cluster is required as a cofactor.

The protein localises to the cytoplasm. It is found in the mitochondrion intermembrane space. In terms of biological role, component of the cytosolic iron-sulfur (Fe-S) protein assembly (CIA) machinery required for the maturation of extramitochondrial Fe-S proteins. Part of an electron transfer chain functioning in an early step of cytosolic Fe-S biogenesis, facilitating the de novo assembly of a [4Fe-4S] cluster on the scaffold complex cfd1-nbp35. Electrons are transferred to dre2 from NADPH via the FAD- and FMN-containing protein tah18. Tah18-dre2 are also required for the assembly of the diferric tyrosyl radical cofactor of ribonucleotide reductase (RNR), probably by providing electrons for reduction during radical cofactor maturation in the catalytic small subunit rnr2. This Aspergillus clavatus (strain ATCC 1007 / CBS 513.65 / DSM 816 / NCTC 3887 / NRRL 1 / QM 1276 / 107) protein is Fe-S cluster assembly protein dre2.